Reading from the N-terminus, the 237-residue chain is MFVFILLSLAAVLQQSFGNVDFNSESPRIKAKQREIVDKHNAFRRSVRPTASNMLRMEWYSEAASNAERWAYRCILDHSPKTSRILNGIKCGENIYMSSIPMTWIDIIKLWHDEYKNFIYGVGANPPGSVIGHYTQIVWYKSYRVGCAASYCPSSSYNYFYVCQYCPAGNFAGLTATPYKSGPTCGDCPSACDNGLCTNPCSREDVFMNCKSLVAQSNCQDDYIRKNCPATCFCPNK.

A signal peptide spans 1-18 (MFVFILLSLAAVLQQSFG). Positions 37-165 (VDKHNAFRRS…SYNYFYVCQY (129 aa)) constitute an SCP domain. 7 disulfide bridges follow: C74–C152, C91–C166, C147–C163, C185–C192, C188–C197, C201–C234, and C219–C232. Residues 201–234 (CSREDVFMNCKSLVAQSNCQDDYIRKNCPATCFC) form the ShKT domain.

The protein belongs to the CRISP family. Expressed by the venom gland.

It is found in the secreted. Weakly blocks contraction of smooth muscle elicited by high potassium-induced depolarization, but does not block caffeine-stimulated contraction. May target voltage-gated calcium channels on smooth muscle. In Dispholidus typus (Boomslang), this protein is Cysteine-rich venom protein DIS2.